Consider the following 112-residue polypeptide: Small ribosomal subunit protein bS6 (112 aa).

It belongs to the bacterial ribosomal protein bS6 family.

Functionally, binds together with bS18 to 16S ribosomal RNA. In Hyphomonas neptunium (strain ATCC 15444), this protein is Small ribosomal subunit protein bS6.